We begin with the raw amino-acid sequence, 265 residues long: MPIWSPKGRAAAGVVASVLFIVFFFLPLAVILMSSLSQQWNGILPSGFTLNHFVNALHGAAWDALLASLTIGFCASLFALLCGVWAALALRQYGVKTQKWLSMVFYLPSAIPSVSVGLGILVAFSQGPLQMNGTLWIVLTAHFVLISAFTFSNVSTGLARISADIENVASSLGASPWYRLRHVTLPLLMPWMMSALALSLSLSMGELGATMMIYPPGWTTLPVAIFSLTDRGNIADGAALTIVLVAITLLLMMKLERIAKWLGQK.

6 consecutive transmembrane segments (helical) span residues 13-33 (GVVA…VILM), 69-89 (LTIG…AALA), 104-124 (VFYL…LVAF), 131-151 (MNGT…AFTF), 185-205 (LPLL…LSMG), and 233-253 (NIAD…LLMM). The ABC transmembrane type-1 domain occupies 65–253 (LLASLTIGFC…LVAITLLLMM (189 aa)).

It belongs to the binding-protein-dependent transport system permease family.

It is found in the cell inner membrane. Probably part of the PhnSTUV complex (TC 3.A.1.11.5) involved in 2-aminoethylphosphonate import. Probably responsible for the translocation of the substrate across the membrane. The sequence is that of Putative 2-aminoethylphosphonate transport system permease protein PhnV (phnV) from Salmonella choleraesuis (strain SC-B67).